The primary structure comprises 303 residues: Aliphatic sulfonates import ATP-binding protein SsuB (303 aa).

Residues 39–263 (LHVRQVVKRY…ERGAAGFAQL (225 aa)) enclose the ABC transporter domain. ATP is bound at residue 71-78 (GRSGCGKS).

It belongs to the ABC transporter superfamily. Aliphatic sulfonates importer (TC 3.A.1.17.2) family. The complex is composed of two ATP-binding proteins (SsuB), two transmembrane proteins (SsuC) and a solute-binding protein (SsuA).

Its subcellular location is the cell inner membrane. It carries out the reaction ATP + H2O + aliphatic sulfonate-[sulfonate-binding protein]Side 1 = ADP + phosphate + aliphatic sulfonateSide 2 + [sulfonate-binding protein]Side 1.. Its function is as follows. Part of the ABC transporter complex SsuABC involved in aliphatic sulfonates import. Responsible for energy coupling to the transport system. In Cupriavidus necator (strain ATCC 17699 / DSM 428 / KCTC 22496 / NCIMB 10442 / H16 / Stanier 337) (Ralstonia eutropha), this protein is Aliphatic sulfonates import ATP-binding protein SsuB.